Here is a 440-residue protein sequence, read N- to C-terminus: Metacaspase-1 (440 aa).

The interval 1–134 (MFPGSGRKTY…NPQGFGQNSG (134 aa)) is disordered. Residues 14–51 (APPPGPPNGYQYGPPPGAQGQYPPPQGYPPQGYPPQGY) are compositionally biased toward pro residues. Positions 52-81 (PPQGYAPQGYPPQGYAPQGYAPQGYQQQGG) are enriched in low complexity. The span at 82–94 (QQQGGQQQGGQQQ) shows a compositional bias: gly residues. The span at 98–110 (RQTYATQEAQNFG) shows a compositional bias: polar residues. Catalysis depends on residues histidine 230 and cysteine 286.

Belongs to the peptidase C14B family.

Its function is as follows. Involved in cell death (apoptosis). The protein is Metacaspase-1 (MCA1) of Debaryomyces hansenii (strain ATCC 36239 / CBS 767 / BCRC 21394 / JCM 1990 / NBRC 0083 / IGC 2968) (Yeast).